An 804-amino-acid polypeptide reads, in one-letter code: Serine/threonine-protein kinase ATG1 (804 aa).

The region spanning 12-308 is the Protein kinase domain; sequence FTIGPEIGRG…FQEFFNDPLI (297 aa). Residues 18 to 26 and Lys41 contribute to the ATP site; that span reads IGRGSFANV. The Proton acceptor role is filled by Asp158. Disordered stretches follow at residues 339-364, 395-415, and 455-506; these read TSPPAKPAPETIKEESEEEERAERAP, INKSSPPPDTVKDGQIKKGAR, and PSPH…MPIS. Basic and acidic residues predominate over residues 404–415; it reads TVKDGQIKKGAR. The segment covering 462–495 has biased composition (polar residues); the sequence is NEHSAANPSGPTETQTQRRFSPSSRTSSIGSNRR.

The protein belongs to the protein kinase superfamily. Ser/Thr protein kinase family. APG1/unc-51/ULK1 subfamily. In terms of assembly, homodimer. Forms a ternary complex with ATG13 and ATG17.

Its subcellular location is the cytoplasm. It localises to the preautophagosomal structure membrane. The enzyme catalyses L-seryl-[protein] + ATP = O-phospho-L-seryl-[protein] + ADP + H(+). It catalyses the reaction L-threonyl-[protein] + ATP = O-phospho-L-threonyl-[protein] + ADP + H(+). Serine/threonine protein kinase involved in the cytoplasm to vacuole transport (Cvt) and found to be essential in autophagy, where it is required for the formation of autophagosomes. Involved in the clearance of protein aggregates which cannot be efficiently cleared by the proteasome. Required for selective autophagic degradation of the nucleus (nucleophagy) as well as for mitophagy which contributes to regulate mitochondrial quantity and quality by eliminating the mitochondria to a basal level to fulfill cellular energy requirements and preventing excess ROS production. Also involved in endoplasmic reticulum-specific autophagic process, in selective removal of ER-associated degradation (ERAD) substrates. Plays a key role in ATG9 and ATG23 cycling through the pre-autophagosomal structure and is necessary to promote ATG18 binding to ATG9 through phosphorylation of ATG9. Catalyzes phosphorylation of ATG4, decreasing the interaction between ATG4 and ATG8 and impairing deconjugation of PE-conjugated forms of ATG8. In Pichia angusta (Yeast), this protein is Serine/threonine-protein kinase ATG1.